The primary structure comprises 270 residues: Mevalonyl-coenzyme A hydratase sidH (270 aa).

Residues 268–270 (SKL) carry the PTS1-type peroxisomal targeting signal motif.

It belongs to the enoyl-CoA hydratase/isomerase family.

It localises to the peroxisome. It participates in siderophore biosynthesis. Functionally, mevalonyl-coenzyme A hydratase; part of the siderophore biosynthetic pathway. Aspergillus fumigatus produces 4 types of siderophores, low-molecular-mass iron chelators, including excreted fusarinine C (FsC) and triacetylfusarinine C (TAFC) for iron uptake and intacellular ferricrocin (FC) for hyphal and hydroxyferricrocin (HFC) for conidial iron distribution and storage. TAFC consists of 3 N(2)-acetyl-N(5)-anhydromevalonyl-N(5)-hydroxyornithine residues cyclically linked by ester bonds; FC is a cyclic hexapeptide with the structure Gly-Ser-Gly-(N(5)-acetyl-N(5)-hydroxyornithine)x3. The biosynthesis of all four siderophores depends on the hydroxylation of ornithine, catalyzed by the monooxygenase sidA. Subsequently, the pathways for biosynthesis of extra- and intracellular siderophores split. For biosynthesis of extracellular siderophores, the transacylase sidF transfers anhydromevalonyl to N(5)-hydroxyornithine. The required anhydromevalonyl-CoA moiety is derived from mevalonate by CoA ligation and dehydration catalyzed by sidI and sidH respectively. The acetylation of N(5)-hydroxyornithine for FC biosynthesis involves the constitutively expressed sidL. FC is hydroxylated to HFC by an as yet uncharacterized enzyme during conidiation. Assembly of fusarinine C (FsC) and FC is catalyzed by two different nonribosomal peptide synthetases (NRPS), sidD and sidC respectively. Subsequently, sidG catalyzes N2-acetylation of FsC for forming TAFC. Both extra- and intracellular siderophores are crucial for growth during iron limitation and virulence. The sequence is that of Mevalonyl-coenzyme A hydratase sidH from Aspergillus fumigatus (strain ATCC MYA-4609 / CBS 101355 / FGSC A1100 / Af293) (Neosartorya fumigata).